A 448-amino-acid polypeptide reads, in one-letter code: Probable glycine dehydrogenase (decarboxylating) subunit 1 (448 aa).

It belongs to the GcvP family. N-terminal subunit subfamily. In terms of assembly, the glycine cleavage system is composed of four proteins: P, T, L and H. In this organism, the P 'protein' is a heterodimer of two subunits.

The catalysed reaction is N(6)-[(R)-lipoyl]-L-lysyl-[glycine-cleavage complex H protein] + glycine + H(+) = N(6)-[(R)-S(8)-aminomethyldihydrolipoyl]-L-lysyl-[glycine-cleavage complex H protein] + CO2. Its function is as follows. The glycine cleavage system catalyzes the degradation of glycine. The P protein binds the alpha-amino group of glycine through its pyridoxal phosphate cofactor; CO(2) is released and the remaining methylamine moiety is then transferred to the lipoamide cofactor of the H protein. The sequence is that of Probable glycine dehydrogenase (decarboxylating) subunit 1 from Exiguobacterium sibiricum (strain DSM 17290 / CCUG 55495 / CIP 109462 / JCM 13490 / 255-15).